The sequence spans 56 residues: Small ribosomal subunit protein uS14 (56 aa).

Cys-21, Cys-24, Cys-39, and Cys-42 together coordinate Zn(2+).

Belongs to the universal ribosomal protein uS14 family. Component of the 40S small ribosomal subunit. Zn(2+) serves as cofactor.

The protein localises to the cytoplasm. It is found in the cytosol. Its subcellular location is the rough endoplasmic reticulum. The chain is Small ribosomal subunit protein uS14 (RpS29) from Bombyx mori (Silk moth).